The chain runs to 79 residues: Small ribosomal subunit protein bS18 (79 aa).

This sequence belongs to the bacterial ribosomal protein bS18 family. In terms of assembly, part of the 30S ribosomal subunit. Forms a tight heterodimer with protein bS6.

Functionally, binds as a heterodimer with protein bS6 to the central domain of the 16S rRNA, where it helps stabilize the platform of the 30S subunit. This Enterococcus faecalis (strain ATCC 700802 / V583) protein is Small ribosomal subunit protein bS18.